We begin with the raw amino-acid sequence, 104 residues long: Large ribosomal subunit protein bL21 (104 aa).

It belongs to the bacterial ribosomal protein bL21 family. In terms of assembly, part of the 50S ribosomal subunit. Contacts protein L20.

Its function is as follows. This protein binds to 23S rRNA in the presence of protein L20. The protein is Large ribosomal subunit protein bL21 of Salinispora tropica (strain ATCC BAA-916 / DSM 44818 / JCM 13857 / NBRC 105044 / CNB-440).